Reading from the N-terminus, the 289-residue chain is Oxaloacetate decarboxylase (289 aa).

Residue Ser-50 participates in substrate binding. Position 88 (Asp-88) interacts with Mg(2+). Substrate-binding residues include Arg-159 and His-235.

The protein belongs to the isocitrate lyase/PEP mutase superfamily. Oxaloacetate decarboxylase family. Homotetramer; dimer of dimers. Requires Mg(2+) as cofactor.

The catalysed reaction is oxaloacetate + H(+) = pyruvate + CO2. Catalyzes the decarboxylation of oxaloacetate into pyruvate. Seems to play a role in maintaining cellular concentrations of bicarbonate and pyruvate. The polypeptide is Oxaloacetate decarboxylase (Pseudomonas putida (strain ATCC 47054 / DSM 6125 / CFBP 8728 / NCIMB 11950 / KT2440)).